A 159-amino-acid chain; its full sequence is SsrA-binding protein (159 aa).

The protein belongs to the SmpB family.

Its subcellular location is the cytoplasm. Its function is as follows. Required for rescue of stalled ribosomes mediated by trans-translation. Binds to transfer-messenger RNA (tmRNA), required for stable association of tmRNA with ribosomes. tmRNA and SmpB together mimic tRNA shape, replacing the anticodon stem-loop with SmpB. tmRNA is encoded by the ssrA gene; the 2 termini fold to resemble tRNA(Ala) and it encodes a 'tag peptide', a short internal open reading frame. During trans-translation Ala-aminoacylated tmRNA acts like a tRNA, entering the A-site of stalled ribosomes, displacing the stalled mRNA. The ribosome then switches to translate the ORF on the tmRNA; the nascent peptide is terminated with the 'tag peptide' encoded by the tmRNA and targeted for degradation. The ribosome is freed to recommence translation, which seems to be the essential function of trans-translation. The sequence is that of SsrA-binding protein from Coxiella burnetii (strain CbuK_Q154) (Coxiella burnetii (strain Q154)).